The primary structure comprises 58 residues: Small ribosomal subunit protein eS27 (58 aa).

Zn(2+) is bound by residues C10, C13, C29, and C32. The C4-type zinc finger occupies 10 to 32 (CPDCEHEQVIFDHPSTIVKCIIC).

It belongs to the eukaryotic ribosomal protein eS27 family. Part of the 30S ribosomal subunit. Requires Zn(2+) as cofactor.

This chain is Small ribosomal subunit protein eS27, found in Archaeoglobus fulgidus (strain ATCC 49558 / DSM 4304 / JCM 9628 / NBRC 100126 / VC-16).